A 384-amino-acid polypeptide reads, in one-letter code: Urea transporter 1 (384 aa).

The segment at 1 to 23 (MDDNPTAVKLDQGGNQAPQGQGR) is disordered. The next 5 helical transmembrane spans lie at 61-81 (ISQVVFVSNPISGILILVGLL), 85-105 (PWCALNGCVGTVVSTLTALLL), 111-131 (AITAGLQGYNATLVGILMAIY), 138-158 (FWWLLFPVSAMSMTCPIFSSA), and 168-188 (LPVFTLPFNMALSMYLSATGH). Residue asparagine 206 is glycosylated (N-linked (GlcNAc...) asparagine). 3 helical membrane passes run 237 to 257 (GGIFLGAILLSSPLMCLHAAI), 279 to 299 (GLWGFNSSLACIAIGGMFMAL), and 327 to 347 (VVGLPSCTWPFCLATLLFLLL).

This sequence belongs to the urea transporter family. Homotrimer; each subunit contains a pore through which urea permeates. Identified in a complex with STOM.

It is found in the cell membrane. The protein localises to the basolateral cell membrane. The enzyme catalyses urea(in) = urea(out). Mediates the transport of urea driven by a concentration gradient across the cell membranes of erythrocytes and the renal inner medullary collecting duct which is critical to the urinary concentrating mechanism. Facilitates water transport in erythrocytes. This Capra hircus (Goat) protein is Urea transporter 1 (SLC14A1).